We begin with the raw amino-acid sequence, 75 residues long: Protein CYSTEINE-RICH TRANSMEMBRANE MODULE 5 (75 aa).

The interval 1 to 29 (MSQYSQNQYAGAYPTPPVSTGPYVAPPPL) is disordered. A compositionally biased stretch (pro residues) spans 14–29 (PTPPVSTGPYVAPPPL). Residues 52–69 (AADGFLKGCLATMLACCV) traverse the membrane as a helical segment.

Belongs to the CYSTM1 family. Heterodimers. Interacts with CYSTM7 and WIH1/CYSTM13. As to expression, mostly expressed in roots, stems, rosette leaves and siliques and, to a lower extent, in flowers and cauline leaves.

Its subcellular location is the cell membrane. It is found in the nucleus. In terms of biological role, involved in resistance to abiotic stress. The protein is Protein CYSTEINE-RICH TRANSMEMBRANE MODULE 5 of Arabidopsis thaliana (Mouse-ear cress).